A 400-amino-acid polypeptide reads, in one-letter code: Ribosomal RNA dihydrouridine synthase (400 aa).

FAD contacts are provided by Ala14, Asp33, Asn34, Arg40, Gly46, Asn51, Val131, Glu367, and Phe380.

The protein belongs to the BaiN/RdsA family. RdsA subfamily. It depends on FAD as a cofactor.

It catalyses the reaction a 5,6-dihydrouridine in mRNA + NAD(+) = a uridine in mRNA + NADH + H(+). Its function is as follows. Catalyzes the synthesis of 5,6-dihydrouridine (D) at position 2449 in 23S rRNA. Can use NADH as a source of reducing equivalents but not NADPH. The protein is Ribosomal RNA dihydrouridine synthase of Escherichia coli (strain K12).